We begin with the raw amino-acid sequence, 314 residues long: Lipoyl synthase (314 aa).

Residues C55, C60, C66, C81, C85, C88, and S292 each coordinate [4Fe-4S] cluster. Positions 67-281 (WEDREATFLI…TQYAEGLGFS (215 aa)) constitute a Radical SAM core domain.

The protein belongs to the radical SAM superfamily. Lipoyl synthase family. The cofactor is [4Fe-4S] cluster.

The protein resides in the cytoplasm. It carries out the reaction [[Fe-S] cluster scaffold protein carrying a second [4Fe-4S](2+) cluster] + N(6)-octanoyl-L-lysyl-[protein] + 2 oxidized [2Fe-2S]-[ferredoxin] + 2 S-adenosyl-L-methionine + 4 H(+) = [[Fe-S] cluster scaffold protein] + N(6)-[(R)-dihydrolipoyl]-L-lysyl-[protein] + 4 Fe(3+) + 2 hydrogen sulfide + 2 5'-deoxyadenosine + 2 L-methionine + 2 reduced [2Fe-2S]-[ferredoxin]. The protein operates within protein modification; protein lipoylation via endogenous pathway; protein N(6)-(lipoyl)lysine from octanoyl-[acyl-carrier-protein]: step 2/2. Its function is as follows. Catalyzes the radical-mediated insertion of two sulfur atoms into the C-6 and C-8 positions of the octanoyl moiety bound to the lipoyl domains of lipoate-dependent enzymes, thereby converting the octanoylated domains into lipoylated derivatives. This Mycobacterium leprae (strain Br4923) protein is Lipoyl synthase.